A 131-amino-acid chain; its full sequence is MARVTVEDCIDKVENRFELVLLASHRARLIASGTPITVERDNDKNPVVALREIADETLTPEDLKEDFIQSLQKHVEVDEPEAEAVPALSSAPDAAQSDAMGDVQFDRMTEEDLLRGLEGLVPPAATDDDGE.

Positions 78-131 (DEPEAEAVPALSSAPDAAQSDAMGDVQFDRMTEEDLLRGLEGLVPPAATDDDGE) are disordered. Over residues 104 to 115 (QFDRMTEEDLLR) the composition is skewed to basic and acidic residues.

The protein belongs to the RNA polymerase subunit omega family. In terms of assembly, the RNAP catalytic core consists of 2 alpha, 1 beta, 1 beta' and 1 omega subunit. When a sigma factor is associated with the core the holoenzyme is formed, which can initiate transcription.

It carries out the reaction RNA(n) + a ribonucleoside 5'-triphosphate = RNA(n+1) + diphosphate. Functionally, promotes RNA polymerase assembly. Latches the N- and C-terminal regions of the beta' subunit thereby facilitating its interaction with the beta and alpha subunits. The sequence is that of DNA-directed RNA polymerase subunit omega from Beijerinckia indica subsp. indica (strain ATCC 9039 / DSM 1715 / NCIMB 8712).